The sequence spans 2108 residues: General negative regulator of transcription subunit 1 (2108 aa).

2 coiled-coil regions span residues N795–T813 and M1021–Q1046. The disordered stretch occupies residues Q1323 to G1352. The segment covering K1329–A1339 has biased composition (polar residues). A compositionally biased stretch (low complexity) spans Q1340 to G1352. Position 2102 is a phosphothreonine (T2102).

Belongs to the CNOT1 family. Forms a NOT protein complex that comprises NOT1, NOT2, NOT3, NOT4 and NOT5. Subunit of the 1.0 MDa CCR4-NOT core complex that contains CCR4, CAF1, NOT1, NOT2, NOT3, NOT4, NOT5, CAF40 and CAF130. In the complex interacts with CCR4, POP2, NOT2, NOT4 and NOT5. The core complex probably is part of a less characterized 1.9 MDa CCR4-NOT complex.

The protein localises to the cytoplasm. It localises to the nucleus. Acts as a component of the CCR4-NOT core complex, which in the nucleus seems to be a general transcription factor, and in the cytoplasm the major mRNA deadenylase involved in mRNA turnover. The NOT protein subcomplex negatively regulates the basal and activated transcription of many genes. Preferentially affects TC-type TATA element-dependent transcription. Could directly or indirectly inhibit component(s) of the general transcription machinery. This chain is General negative regulator of transcription subunit 1 (CDC39), found in Saccharomyces cerevisiae (strain ATCC 204508 / S288c) (Baker's yeast).